A 294-amino-acid polypeptide reads, in one-letter code: Ribosomal protein L11 methyltransferase (294 aa).

Residues threonine 144, glycine 165, aspartate 187, and asparagine 229 each coordinate S-adenosyl-L-methionine.

The protein belongs to the methyltransferase superfamily. PrmA family.

The protein resides in the cytoplasm. It catalyses the reaction L-lysyl-[protein] + 3 S-adenosyl-L-methionine = N(6),N(6),N(6)-trimethyl-L-lysyl-[protein] + 3 S-adenosyl-L-homocysteine + 3 H(+). Functionally, methylates ribosomal protein L11. The polypeptide is Ribosomal protein L11 methyltransferase (Pseudomonas aeruginosa (strain LESB58)).